The primary structure comprises 382 residues: MGDWSALGKLLDKVQAYSTAGGKVWLSVLFIFRILLLGTAVESAWGDEQSAFRCNTQQPGCENVCYDKSFPISHVRFWVLQIIFVSVPTLLYLAHVFYVMRKEEKLNKKEEELKVAQTDGVNVEMHLKQIEIKKFKYGIEEHGKVKMRGGLLRTYIISILFKSIFEVAFLLIQWYIYGFSLSAVYTCKRDPCPHQVDCFLSRPTEKTIFIIFMLVVSLVSLALNIIELFYVFFKGVKDRVKGKSDPYHATSGALSPTKDCGSQKYAYFNGCSSPTAPLSPMSPPGYKPVTGDRNNSSCRNYNKQASEQNWANYSAEQNRMGQAGSTISNSHAQPFDFPDDNQNSKKLAAGHELQPLAIVDQRPSSRASSRASSRPRPDDLEI.

Topologically, residues 2–23 (GDWSALGKLLDKVQAYSTAGGK) are cytoplasmic. Ser-5 bears the Phosphoserine mark. The chain crosses the membrane as a helical span at residues 24–44 (VWLSVLFIFRILLLGTAVESA). At 45-76 (WGDEQSAFRCNTQQPGCENVCYDKSFPISHVR) the chain is on the extracellular side. Disulfide bonds link Cys-54-Cys-192 and Cys-187-Cys-198. A helical transmembrane segment spans residues 77-97 (FWVLQIIFVSVPTLLYLAHVF). Over 98-155 (YVMRKEEKLNKKEEELKVAQTDGVNVEMHLKQIEIKKFKYGIEEHGKVKMRGGLLRTY) the chain is Cytoplasmic. Lys-144 is covalently cross-linked (Glycyl lysine isopeptide (Lys-Gly) (interchain with G-Cter in SUMO)). A helical transmembrane segment spans residues 156–176 (IISILFKSIFEVAFLLIQWYI). At 177-207 (YGFSLSAVYTCKRDPCPHQVDCFLSRPTEKT) the chain is on the extracellular side. The chain crosses the membrane as a helical span at residues 208-228 (IFIIFMLVVSLVSLALNIIEL). At 229–382 (FYVFFKGVKD…SRPRPDDLEI (154 aa)) the chain is on the cytoplasmic side. Lys-237 participates in a covalent cross-link: Glycyl lysine isopeptide (Lys-Gly) (interchain with G-Cter in SUMO). Positions 244-382 (SDPYHATSGA…SRPRPDDLEI (139 aa)) are interaction with NOV. Position 247 is a phosphotyrosine (Tyr-247). 2 positions are modified to phosphoserine: Ser-255 and Ser-262. Residues 264–382 (KYAYFNGCSS…SRPRPDDLEI (119 aa)) form an interaction with UBQLN4 region. Cys-271 carries the S-nitrosocysteine modification. The residue at position 275 (Thr-275) is a Phosphothreonine. The segment at 279–300 (SPMSPPGYKPVTGDRNNSSCRN) is disordered. A phosphoserine mark is found at Ser-306 and Ser-314. Polar residues predominate over residues 317-332 (QNRMGQAGSTISNSHA). The tract at residues 317 to 382 (QNRMGQAGST…SRPRPDDLEI (66 aa)) is disordered. Phosphoserine; by CK1 is present on Ser-325. At Thr-326 the chain carries Phosphothreonine. 2 positions are modified to phosphoserine; by CK1: Ser-328 and Ser-330. Ser-344 and Ser-365 each carry phosphoserine. Residues 362-374 (RPSSRASSRASSR) are compositionally biased toward low complexity. Ser-368 carries the phosphoserine; by PKC/PRKCG and PKC/PRKCD modification. Ser-369 and Ser-373 each carry phosphoserine.

It belongs to the connexin family. Alpha-type (group II) subfamily. In terms of assembly, a connexon is composed of a hexamer of connexins. Interacts with SGSM3. Interacts with RIC1/CIP150. Interacts with CNST and CSNK1D. Interacts (via C-terminus) with TJP1. Interacts (via C-terminus) with SRC (via SH3 domain). Interacts (not ubiquitinated) with UBQLN4 (via UBA domain). Interacts with NOV. Interacts with TMEM65. Interacts with ANK3/ANKG and PKP2. Post-translationally, phosphorylation at Ser-325, Ser-328 and Ser-330 by CK1 modulates gap junction assembly. Phosphorylated at Ser-368 by PRKCG; phosphorylation induces disassembly of gap junction plaques and inhibition of gap junction activity. Phosphorylation at Ser-368 by PRKCD triggers its internalization into small vesicles leading to proteasome-mediated degradation. Sumoylated with SUMO1, SUMO2 and SUMO3, which may regulate the level of functional Cx43 gap junctions at the plasma membrane. May be desumoylated by SENP1 or SENP2. In terms of processing, S-nitrosylation at Cys-271 is enriched at the muscle endothelial gap junction in arteries, it augments channel permeability and may regulate of smooth muscle cell to endothelial cell communication. Post-translationally, acetylated in the developing cortex; leading to delocalization from the cell membrane.

The protein resides in the cell membrane. Its subcellular location is the cell junction. The protein localises to the gap junction. It localises to the endoplasmic reticulum. Functionally, gap junction protein that acts as a regulator of bladder capacity. A gap junction consists of a cluster of closely packed pairs of transmembrane channels, the connexons, through which materials of low MW diffuse from one cell to a neighboring cell. May play a critical role in the physiology of hearing by participating in the recycling of potassium to the cochlear endolymph. Negative regulator of bladder functional capacity: acts by enhancing intercellular electrical and chemical transmission, thus sensitizing bladder muscles to cholinergic neural stimuli and causing them to contract. May play a role in cell growth inhibition through the regulation of NOV expression and localization. Plays an essential role in gap junction communication in the ventricles. This chain is Gap junction alpha-1 protein (GJA1), found in Macaca fascicularis (Crab-eating macaque).